We begin with the raw amino-acid sequence, 246 residues long: 1-(5-phosphoribosyl)-5-[(5-phosphoribosylamino)methylideneamino] imidazole-4-carboxamide isomerase (246 aa).

Catalysis depends on D12, which acts as the Proton acceptor. Residue D134 is the Proton donor of the active site.

This sequence belongs to the HisA/HisF family.

The protein localises to the cytoplasm. The enzyme catalyses 1-(5-phospho-beta-D-ribosyl)-5-[(5-phospho-beta-D-ribosylamino)methylideneamino]imidazole-4-carboxamide = 5-[(5-phospho-1-deoxy-D-ribulos-1-ylimino)methylamino]-1-(5-phospho-beta-D-ribosyl)imidazole-4-carboxamide. Its pathway is amino-acid biosynthesis; L-histidine biosynthesis; L-histidine from 5-phospho-alpha-D-ribose 1-diphosphate: step 4/9. The chain is 1-(5-phosphoribosyl)-5-[(5-phosphoribosylamino)methylideneamino] imidazole-4-carboxamide isomerase from Haloarcula marismortui (strain ATCC 43049 / DSM 3752 / JCM 8966 / VKM B-1809) (Halobacterium marismortui).